The primary structure comprises 137 residues: ATP synthase epsilon chain, chloroplastic (137 aa).

Belongs to the ATPase epsilon chain family. In terms of assembly, F-type ATPases have 2 components, CF(1) - the catalytic core - and CF(0) - the membrane proton channel. CF(1) has five subunits: alpha(3), beta(3), gamma(1), delta(1), epsilon(1). CF(0) has three main subunits: a, b and c.

Its subcellular location is the plastid. The protein localises to the chloroplast thylakoid membrane. In terms of biological role, produces ATP from ADP in the presence of a proton gradient across the membrane. The sequence is that of ATP synthase epsilon chain, chloroplastic from Sorghum bicolor (Sorghum).